The sequence spans 682 residues: MATLADSAICFLLLSLLLIGACLVTPTEGRAKDDRRTRGRGSSSGVLSSSSSSSNNMNNGYYSGSSSTAGSSSGYVFTSSSAVNSGSTGYSGPMDSTGFCTRRRDMKLMCYCTPDENHVPVQKAECWVFSEGLHQNDTTWTRFYQQKRLRELKFVIQNNARLDYIPTMIIEPLKNLSSIVIEYSQVEIVKSYAFANLPFLERIILNNNHIMALDQDAFANHIRLRELNLEHNQIFEMDRYAFRNLPLCERLFLNNNNISTLHEGLFADMARLTFLNLAHNQINVLTSEIFRGLGNLNVLKLTRNNLNFIGDTVFAELWSLSELELDDNRIERISERALDGLNTLKTLNLRNNLLKKIDNGLLRGTPALLSINVQANKLETLTFYTFQPIMDNLVNSTSELLVSDNKFICDCRLQWIFELKNRTRHLQLRDSLEDLHCTLQEPKLSHFVDPVPPTILDVLNIGGFTAIGSNSASMGGVGNSVVGSSYSGLTMDDSRKHLGSRSRQALRGQRQFASSAENVVESKMRRRRKRQEEVKEKDLAAVAPAHKRYDYYDDNNGGMSLGHGLDLDDNLSLHKQGFYGAGSPVVGHNDVDVLMTSHSASGDALDILTTKNAIYIKLFLLKPEMLPCHDELSDPTELPLSRDLMDVRSNVGQDMSTAGANSLAQGMTIIVSLVALMMISRG.

The N-terminal stretch at 1 to 24 (MATLADSAICFLLLSLLLIGACLV) is a signal peptide. The disordered stretch occupies residues 29–54 (GRAKDDRRTRGRGSSSGVLSSSSSSS). Residues 40–54 (RGSSSGVLSSSSSSS) are compositionally biased toward low complexity. 11 LRR repeats span residues 149–172 (LRELKFVIQNNARLDYIPTMIIEP), 173–196 (LKNLSSIVIEYSQVEIVKSYAFAN), 199–220 (FLERIILNNNHIMALDQDAFAN), 223–244 (RLRELNLEHNQIFEMDRYAFRN), 247–268 (LCERLFLNNNNISTLHEGLFAD), 271–292 (RLTFLNLAHNQINVLTSEIFRG), 295–316 (NLNVLKLTRNNLNFIGDTVFAE), 319–342 (SLSELELDDNRIERISERALDGLN), 343–364 (TLKTLNLRNNLLKKIDNGLLRG), 367–388 (ALLSINVQANKLETLTFYTFQP), and 389–404 (IMDNLVNSTSELLVSD). One can recognise an LRRCT domain in the interval 405 to 462 (NKFICDCRLQWIFELKNRTRHLQLRDSLEDLHCTLQEPKLSHFVDPVPPTILDVLNIG). The segment at 503–536 (RQALRGQRQFASSAENVVESKMRRRRKRQEEVKE) is disordered. A lipid anchor (GPI-anchor amidated alanine) is attached at Ala658. A propeptide spans 659–682 (GANSLAQGMTIIVSLVALMMISRG) (removed in mature form).

In terms of tissue distribution, predominantly expressed in abdominal and thoracic segment muscle and motorneuron cells.

The protein localises to the cell membrane. In terms of biological role, cell adhesion protein involved in target recognition during neuromuscular development. Mediates homophilic cellular adhesion. This is Connectin (Con) from Drosophila melanogaster (Fruit fly).